Here is a 277-residue protein sequence, read N- to C-terminus: Myelin proteolipid protein (277 aa).

The Cytoplasmic segment spans residues 1-10 (MGLLECCARC). 3 S-palmitoyl cysteine lipidation sites follow: Cys-6, Cys-7, and Cys-10. Residues 11 to 36 (LVGAPFASLVATGLCFFGVALFCGCG) form a helical membrane-spanning segment. Residues 37–59 (HEALTGTEKLIETYFSKNYQDYE) lie on the Extracellular side of the membrane. Residues 60–88 (YLINVIHAFQYVIYGTASFFFLYGALLLA) traverse the membrane as a helical segment. At 89 to 151 (EGFYTTGAVR…LGKWLGHPDK (63 aa)) the chain is on the cytoplasmic side. Cys-109 is lipidated: S-palmitoyl cysteine. A Phosphoserine modification is found at Ser-114. Thr-116 and Thr-118 each carry phosphothreonine. 2 S-palmitoyl cysteine lipidation sites follow: Cys-139 and Cys-141. Residues 152–178 (FVGITYALTVVWLLVFACSAVPVYIYF) form a helical membrane-spanning segment. The Extracellular portion of the chain corresponds to 179–238 (NTWTTCQSIAFPSKTSASIGTLCADARMYGVLPWNAFPGKVCGSNLLSICKTAEFQMTFH). Disulfide bonds link Cys-184-Cys-228 and Cys-201-Cys-220. Thr-199 carries O-palmitoyl threonine lipidation. The chain crosses the membrane as a helical span at residues 239 to 268 (LFIAAFVGAAATLVSLLTFMIAATYNFAVL). At 269-277 (KLMGRGTKF) the chain is on the cytoplasmic side.

Belongs to the myelin proteolipid protein family. As to quaternary structure, interacts with MAL.

The protein localises to the cell membrane. It is found in the myelin membrane. Functionally, this is the major myelin protein from the central nervous system. It plays an important role in the formation or maintenance of the multilamellar structure of myelin. This Oryctolagus cuniculus (Rabbit) protein is Myelin proteolipid protein (PLP1).